The following is a 106-amino-acid chain: Nucleoid-associated protein RPD_0086 (106 aa).

The protein belongs to the YbaB/EbfC family. As to quaternary structure, homodimer.

It is found in the cytoplasm. The protein resides in the nucleoid. Binds to DNA and alters its conformation. May be involved in regulation of gene expression, nucleoid organization and DNA protection. In Rhodopseudomonas palustris (strain BisB5), this protein is Nucleoid-associated protein RPD_0086.